Consider the following 426-residue polypeptide: Tryptophan--tRNA ligase (426 aa).

The 'HIGH' region signature appears at 66–74 (PSGEMHLGN). Positions 314-318 (KMSSS) match the 'KMSKS' region motif.

Belongs to the class-I aminoacyl-tRNA synthetase family.

It is found in the cytoplasm. The catalysed reaction is tRNA(Trp) + L-tryptophan + ATP = L-tryptophyl-tRNA(Trp) + AMP + diphosphate + H(+). This Thermoplasma volcanium (strain ATCC 51530 / DSM 4299 / JCM 9571 / NBRC 15438 / GSS1) protein is Tryptophan--tRNA ligase.